The chain runs to 438 residues: Putative formin-like protein 21a (438 aa).

Residues 1–74 (MSPVEISGAD…RVLPRPPPPP (74 aa)) form a disordered region. Over residues 22-61 (PLPPPPPPPPPPMRRRAPLPPPPPPPMRRRAPLPPPPPPA) the composition is skewed to pro residues. Residues 124 to 438 (FPCPSKKKSS…SYGYFDQPWI (315 aa)) form the FH2 domain.

The protein belongs to the formin-like family. Class-II subfamily.

The sequence is that of Putative formin-like protein 21a (FH21A) from Arabidopsis thaliana (Mouse-ear cress).